Reading from the N-terminus, the 270-residue chain is Multi-heme protein MamP (270 aa).

Over 1–6 the chain is Cytoplasmic; sequence MNSKLV. The segment at 7 to 20 is a transmembrane helix; sequence LLVVGVVFALVLVI. Over 21-270 the chain is Lumenal; that stretch reads GRQGGVVAPQ…GPCEACHVIN (250 aa). Residues 84 to 201 form a PDZ region; the sequence is NLKVFEGHWQ…GGLGFAQLEG (118 aa). The short motif at 205–225 is the MCR (magnetochrome) 1 element; it reads ILPGDPRPHGYRGACTDCHPV. Cysteine 219, cysteine 222, histidine 223, cysteine 263, cysteine 266, and histidine 267 together coordinate heme. The MCR 2 signature appears at 245–269; sequence ITRDAVTRGVSPHEVRGPCEACHVI.

This sequence belongs to the magnetosome MamP family. As to quaternary structure, homodimer. Heme is required as a cofactor. Subject to proteolytic cleavage which requires both MamE and MamO.

The protein localises to the cell inner membrane. Its function is as follows. Involved in redox-control of magnetite formation. Oxidizes Fe(2+) at alkaline pH; successively forms ferrihydrite (Fe(3+)(2)O(3) 0.5 H(2)O) then magnetite (Fe(3)O(4)) from an Fe(2+) solution. The polypeptide is Multi-heme protein MamP (Magnetospirillum gryphiswaldense (strain DSM 6361 / JCM 21280 / NBRC 15271 / MSR-1)).